Reading from the N-terminus, the 577-residue chain is MGITYLHISVATTALSFVGLQVWTELSLDRLRADGIITKNISLGNSENTLELLLSSHTTIALLASFVLNIYILLVLSLKTLFFGDLYAIETRKLVERLANYIIYKGTFLPFVVPRTVFQGVLWTIWLTVLCTLKMFQALARDRLDRLNASPSSTPWTYFRVYSALFMVLSTDLCWIKLSLMIYNTVGSSVYLLLLFEPCGIAFETLQALLIHGFQLLDMWINHLAVKNSDCQRSKFYDSMTAGSLLEWKGLLNRNLGFFLDMATLVMALGHYLHIWWLHGMAFHLVDAVLFLNIRALLSSILKRIKGYIKLRVALGALHAALLDATSEELRDYDDECAICREPMAKAKRLHCNHLFHLGCLRSWLDQGLNEVYSCPTCRKPLFVGRTESEANPSRGEVSSDEHLARQFERQNNSVHALTTGMFPTETPNFTESDPWRNSEVDPSWLQTWSDQGVDVVGSSAGSRSVGLGQVQLMMRHLASVGEGSAQTTLDDASWGLWPMNPSQASTSSTYVPPGAGGRTGGLHLRTVSRAANNMASILAMAETVREVLPHVPDEIIFQDLQRTNSVSVTVNNLLQM.

A run of 6 helical transmembrane segments spans residues Ile3 to Trp23, Thr58 to Leu78, Gly120 to Ala140, Tyr162 to Ile182, Tyr191 to Ile211, and Tyr272 to Leu292. The RING-type; atypical zinc-finger motif lies at Cys337 to Arg379. Residues Ser537–Met577 enclose the CUE domain.

Interacts (via C-terminus) with RPM1 (via N-terminus).

It localises to the membrane. It carries out the reaction S-ubiquitinyl-[E2 ubiquitin-conjugating enzyme]-L-cysteine + [acceptor protein]-L-lysine = [E2 ubiquitin-conjugating enzyme]-L-cysteine + N(6)-ubiquitinyl-[acceptor protein]-L-lysine.. The protein operates within protein modification; protein ubiquitination. In terms of biological role, E3 ubiquitin protein ligase that acts as a positive regulator of RPM1- and RPS2-dependent hypersensitive response (HR), in association with RIN2. Probably not required for RPM1 degradation during HR. This chain is E3 ubiquitin protein ligase RIN3 (RIN3), found in Arabidopsis thaliana (Mouse-ear cress).